The following is a 361-amino-acid chain: Protein Wnt-2 (361 aa).

Residues 1–27 (MNASVLGLCLSGPLVLLLAWLAPPVTS) form the signal peptide. 11 disulfides stabilise this stretch: cysteine 77-cysteine 88, cysteine 128-cysteine 136, cysteine 138-cysteine 158, cysteine 207-cysteine 221, cysteine 209-cysteine 216, cysteine 279-cysteine 310, cysteine 295-cysteine 305, cysteine 309-cysteine 349, cysteine 325-cysteine 340, cysteine 327-cysteine 337, and cysteine 332-cysteine 333. The O-palmitoleoyl serine; by PORCN moiety is linked to residue serine 213. Residue asparagine 296 is glycosylated (N-linked (GlcNAc...) asparagine).

Belongs to the Wnt family. Post-translationally, palmitoleoylation is required for efficient binding to frizzled receptors. Depalmitoleoylation leads to Wnt signaling pathway inhibition.

The protein localises to the secreted. It localises to the extracellular space. It is found in the extracellular matrix. Its function is as follows. Ligand for members of the frizzled family of seven transmembrane receptors. Probable developmental protein. May be a signaling molecule which affects the development of discrete regions of tissues. Is likely to signal over only few cell diameters. The protein is Protein Wnt-2 (WNT2) of Ornithorhynchus anatinus (Duckbill platypus).